The chain runs to 389 residues: Pyruvylated Gal-beta-1,3-epitope synthesis protein 2 (389 aa).

The Cytoplasmic segment spans residues 1 to 16 (MTKLWVNFFSQKLLRL). A helical membrane pass occupies residues 17-37 (LIPSIIVVFAFAALFAIYSPI). Residues 38–389 (QLGGINFYKR…WSNSFDLITA (352 aa)) are Lumenal-facing.

The protein resides in the endoplasmic reticulum membrane. It localises to the golgi apparatus membrane. Its function is as follows. Involved in cell wall biogenesis. Has a role in the addition of Gal-beta1,3 moeities to galactomannans and their subsequent pyruvylation. Has a role in meiosis. In Schizosaccharomyces pombe (strain 972 / ATCC 24843) (Fission yeast), this protein is Pyruvylated Gal-beta-1,3-epitope synthesis protein 2 (pvg2).